The sequence spans 957 residues: Glycine dehydrogenase (decarboxylating) (957 aa).

N6-(pyridoxal phosphate)lysine is present on Lys708.

It belongs to the GcvP family. In terms of assembly, the glycine cleavage system is composed of four proteins: P, T, L and H. Pyridoxal 5'-phosphate is required as a cofactor.

The enzyme catalyses N(6)-[(R)-lipoyl]-L-lysyl-[glycine-cleavage complex H protein] + glycine + H(+) = N(6)-[(R)-S(8)-aminomethyldihydrolipoyl]-L-lysyl-[glycine-cleavage complex H protein] + CO2. In terms of biological role, the glycine cleavage system catalyzes the degradation of glycine. The P protein binds the alpha-amino group of glycine through its pyridoxal phosphate cofactor; CO(2) is released and the remaining methylamine moiety is then transferred to the lipoamide cofactor of the H protein. The polypeptide is Glycine dehydrogenase (decarboxylating) (Salmonella dublin (strain CT_02021853)).